Consider the following 507-residue polypeptide: MVNIRPDETSSIILGQTAQYDQEVGVFSTGTVLQVGDGIARIHGPDGVTAGELVESEDGTVGIALNSEPDNAGAVSMGDGSTIQEGSSVKATGKIAQIPVSDAYLGRVANAPAQPTDGKGRIAASEPRLTESPAPGIISRRSVYEPMQTGLIATDPMIPTGRGQRELIIGDRQTGKTAVAIDTTPNQRGQNVICVYVAIGQKASPAAQVVSTFEERGAMEYTVAVAETANPPATSQYLAPYTGAALAEYFMYRKRHTLIIYDDPSKQAQAYRQMSLLPRRPPGREAHPGDVPHLHPRPPERAAKLSSQPGEGSTTASPTVETQAGDVSAYIPTNVTSTTDGQIFLSADLSNAGVRPATNVGISASRVGPAAQIKATKQVAGKSKSELAQFAEPEASAQFASDPDKATRNQSARGQRSRELLKQSQPAPLPVEEQVATTHAGASGFSDVSEIGQVQGSPAQSREYLVTNKPEPAEIVRPTKTFTERAETILKEAIKEHTESFSLKKQI.

170 to 177 (GDRQTGKT) serves as a coordination point for ATP. Disordered stretches follow at residues 278–325 (PRRP…TQAG), 392–430 (EPEA…APLP), and 452–471 (GQVQ…NKPE). The segment covering 282–303 (PGREAHPGDVPHLHPRPPERAA) has biased composition (basic and acidic residues). Polar residues predominate over residues 305 to 322 (LSSQPGEGSTTASPTVET).

Belongs to the ATPase alpha/beta chains family. As to quaternary structure, F-type ATPases have 2 components, CF(1) - the catalytic core - and CF(0) - the membrane proton channel. CF(1) has five subunits: alpha(3), beta(3), gamma(1), delta(1), epsilon(1). CF(0) has four main subunits: a, b, b' and c.

It localises to the plastid. The protein resides in the chloroplast thylakoid membrane. It catalyses the reaction ATP + H2O + 4 H(+)(in) = ADP + phosphate + 5 H(+)(out). In terms of biological role, produces ATP from ADP in the presence of a proton gradient across the membrane. The alpha chain is a regulatory subunit. This Selaginella uncinata (Blue spike-moss) protein is ATP synthase subunit alpha, chloroplastic.